The primary structure comprises 277 residues: Large ribosomal subunit protein uL2 (277 aa).

Disordered stretches follow at residues lysine 32–glycine 58 and valine 225–asparagine 277.

This sequence belongs to the universal ribosomal protein uL2 family. In terms of assembly, part of the 50S ribosomal subunit. Forms a bridge to the 30S subunit in the 70S ribosome.

In terms of biological role, one of the primary rRNA binding proteins. Required for association of the 30S and 50S subunits to form the 70S ribosome, for tRNA binding and peptide bond formation. It has been suggested to have peptidyltransferase activity; this is somewhat controversial. Makes several contacts with the 16S rRNA in the 70S ribosome. The chain is Large ribosomal subunit protein uL2 from Borrelia recurrentis (strain A1).